A 534-amino-acid polypeptide reads, in one-letter code: MEVEGALKLVGEMGIYQIYLSFLLAVLLQLYSATEAIIITILGATPPYHWMNDSLTANGSRGKQYGSQLPAEGEHGHVVFDGNFTSIVSEWFLVGGAAYEVSVSSSVYFGGVLIGVISFGQLSDRFGRKPVYVTGLALEVVFAVMNALTPIFPLFLLTRFLVGVMNGGMSLVAFVLLNECIGASYWAAAGSLGSLCFAVGIAQFALIGYFIRSWRLLALLVNVQGAAVLALSLCIPESPRWLHAQGRLREAQESLLSLGRRNRRKVTSFTLCPRQKDSAHSANILTIYSNAILRQRTLIMMWVWFVCSLVYYGLTLSSGDLGGDIYLNLALSGLAELPAYPLCMYLINHKRVGRRGSLAGFLCVGGGACLLIMLVPGKTGSGPLSVLNSQTLSLLGKLNISAAFNIVYIYSSELYPTCVRNLGMGVCSMFSRIGGIIAPFIPALRFAHWALPFIVFGAAGVSAGLLSLLLPETLSAPLPETLADLRGAPYRRLEPDGEAMLHRPQAELGAFTNGSSEEDEEEELDAVRECQALI.

Residues 22 to 42 (FLLAVLLQLYSATEAIIITIL) form a helical membrane-spanning segment. N-linked (GlcNAc...) asparagine glycosylation is found at N52, N58, and N83. The next 11 helical transmembrane spans lie at 97-117 (AAYE…IGVI), 136-156 (LALE…PLFL), 161-181 (LVGV…NECI), 191-211 (SLGS…GYFI), 216-236 (LLAL…LCIP), 297-317 (TLIM…LTLS), 327-347 (LNLA…MYLI), 356-376 (GSLA…MLVP), 391-411 (TLSL…YIYS), 424-444 (MGVC…IPAL), and 450-470 (ALPF…SLLL). N513 carries N-linked (GlcNAc...) asparagine glycosylation.

The protein belongs to the major facilitator (TC 2.A.1) superfamily. Organic cation transporter (TC 2.A.1.19) family.

It is found in the membrane. In terms of biological role, probably transports organic cations. The protein is Solute carrier family 22 member 15 (slc22a15) of Xenopus tropicalis (Western clawed frog).